Here is a 512-residue protein sequence, read N- to C-terminus: Tyrosine-protein kinase Lyn (512 aa).

The segment at 1 to 62 is disordered; that stretch reads MGCIKSKGKD…GQRFQTKDPE (62 aa). G2 carries N-myristoyl glycine lipidation. Residue C3 is the site of S-palmitoyl cysteine attachment. A phosphoserine mark is found at S11 and S13. Residues 63 to 123 enclose the SH3 domain; it reads EQGDIVVALY…PSNYVAKLNT (61 aa). The SH2 domain maps to 129 to 226; sequence WFFKDITRKD…GLCRRLEKAC (98 aa). Y193 is modified (phosphotyrosine). S228 is subject to Phosphoserine. The 255-residue stretch at 247–501 folds into the Protein kinase domain; sequence IKLVKRLGAG…YLQSVLDDFY (255 aa). Residues 253 to 261 and K275 each bind ATP; that span reads LGAGQFGEV. A phosphotyrosine mark is found at Y306 and Y316. Residue D367 is the Proton acceptor of the active site. The residue at position 397 (Y397) is a Phosphotyrosine; by autocatalysis. 2 positions are modified to phosphotyrosine: Y460 and Y473. Y508 bears the Phosphotyrosine; by autocatalysis, CSK and MATK mark.

Belongs to the protein kinase superfamily. Tyr protein kinase family. SRC subfamily. In terms of assembly, interacts with TEC. Interacts (via SH2 domain) with FLT3 (tyrosine phosphorylated). Interacts with LIME1 and with CD79A upon activation of the B-cell antigen receptor. Interacts with the B-cell receptor complex. Interacts with phosphorylated THEMIS2. Interacts with EPOR. Interacts with MS4A2/FCER1B. Interaction (via the SH2 and SH3 domains) with MUC1 is stimulated by IL7 and the subsequent phosphorylation increases the binding between MUC1 and CTNNB1/beta-catenin. Interacts with ADAM15. Interacts with NDFIP2 and more weakly with NDFIP1. Interacts with FASLG. Interacts with KIT. Interacts with HCLS1. Interacts with FCGR2B. Interacts with FCGR1A; the interaction may be indirect. Interacts with CD19, CD22, CD79A and CD79B. Interacts (via SH3 domain) with CBLC, PPP1R15A and PDE4A. Interacts with TGFB1I1. Interacts (via SH3 domain) with PIK3R1, the regulatory subunit of phosphatidylinositol 3-kinase; this interaction enhances phosphatidylinositol 3-kinase activity. Interacts with CSF2RB, the common subunit of the IL3, IL5 and CSF2 receptors. Interacts with PAG1; identified in a complex with PAG1 and STAT3. Interacts with ABL1. Interacts with PTPN6/SHP-1. Interacts (via SH3 domain) with SCIMP (via proline-rich region). This interaction facilitates the phosphorylation of SCIMP on 'Tyr-107', which enhances binding of SCIMP to TLR4, and consequently the phosphorylation of TLR4 in response to stimulation by lipopolysaccharide in macrophages. Interacts with LPXN (via LD motif 3) and the interaction is induced upon B-cell antigen receptor (BCR) activation. Interacts (via SH3-domain) with ANKRD54 (via ankyrin repeat region) in an activation-independent status of LYN. Forms a multiprotein complex with ANKRD54 and HCLS1. Interacts (via SH2 and SH3 domains) with UNC119; leading to LYN activation. Interacts with CD36. Interacts with LYN. Interacts with SKAP1 and FYB1; this interaction promotes the phosphorylation of CLNK. Interacts with BCAR1/CAS and NEDD9/HEF1. (Microbial infection) Interacts with Epstein-Barr virus LMP2A. As to quaternary structure, (Microbial infection) Interacts with Herpes virus saimiri tyrosine kinase interacting protein (Tip). Ubiquitinated by CBL, leading to its degradation. Ubiquitination is SH3-dependent. In terms of processing, autophosphorylated. Phosphorylated on tyrosine residues in response to KIT signaling. Phosphorylation at Tyr-397 is required for optimal activity. Phosphorylation at Tyr-508 inhibits kinase activity. Phosphorylated at Tyr-508 by CSK. Dephosphorylated by PTPRC/CD45. Becomes rapidly phosphorylated upon activation of the B-cell receptor and the immunoglobulin receptor FCGR1A. Phosphorylated in response to ITGB1 in B-cells. Detected in monocytes (at protein level). Detected in placenta, and in fetal brain, lung, liver and kidney. Widely expressed in a variety of organs, tissues, and cell types such as epidermoid, hematopoietic, and neuronal cells. Expressed in primary neuroblastoma tumors.

It localises to the cell membrane. It is found in the nucleus. The protein resides in the cytoplasm. Its subcellular location is the perinuclear region. The protein localises to the golgi apparatus. It localises to the membrane. The catalysed reaction is L-tyrosyl-[protein] + ATP = O-phospho-L-tyrosyl-[protein] + ADP + H(+). Subject to autoinhibition, mediated by intramolecular interactions between the SH2 domain and the C-terminal phosphotyrosine. Phosphorylation at Tyr-397 is required for optimal activity. Phosphorylated by CSK at Tyr-508; phosphorylation at Tyr-508 inhibits kinase activity. Kinase activity is modulated by dephosphorylation by PTPRC/CD45. Inhibited by Dasatinib, PP2, and SU6656. Functionally, non-receptor tyrosine-protein kinase that transmits signals from cell surface receptors and plays an important role in the regulation of innate and adaptive immune responses, hematopoiesis, responses to growth factors and cytokines, integrin signaling, but also responses to DNA damage and genotoxic agents. Functions primarily as negative regulator, but can also function as activator, depending on the context. Required for the initiation of the B-cell response, but also for its down-regulation and termination. Plays an important role in the regulation of B-cell differentiation, proliferation, survival and apoptosis, and is important for immune self-tolerance. Acts downstream of several immune receptors, including the B-cell receptor, CD79A, CD79B, CD5, CD19, CD22, FCER1, FCGR2, FCGR1A, TLR2 and TLR4. Plays a role in the inflammatory response to bacterial lipopolysaccharide. Mediates the responses to cytokines and growth factors in hematopoietic progenitors, platelets, erythrocytes, and in mature myeloid cells, such as dendritic cells, neutrophils and eosinophils. Acts downstream of EPOR, KIT, MPL, the chemokine receptor CXCR4, as well as the receptors for IL3, IL5 and CSF2. Plays an important role in integrin signaling. Regulates cell proliferation, survival, differentiation, migration, adhesion, degranulation, and cytokine release. Involved in the regulation of endothelial activation, neutrophil adhesion and transendothelial migration. Down-regulates signaling pathways by phosphorylation of immunoreceptor tyrosine-based inhibitory motifs (ITIM), that then serve as binding sites for phosphatases, such as PTPN6/SHP-1, PTPN11/SHP-2 and INPP5D/SHIP-1, that modulate signaling by dephosphorylation of kinases and their substrates. Phosphorylates LIME1 in response to CD22 activation. Phosphorylates BTK, CBL, CD5, CD19, CD72, CD79A, CD79B, CSF2RB, DOK1, HCLS1, LILRB3/PIR-B, MS4A2/FCER1B, SYK and TEC. Promotes phosphorylation of SIRPA, PTPN6/SHP-1, PTPN11/SHP-2 and INPP5D/SHIP-1. Mediates phosphorylation of the BCR-ABL fusion protein. Required for rapid phosphorylation of FER in response to FCER1 activation. Mediates KIT phosphorylation. Acts as an effector of EPOR (erythropoietin receptor) in controlling KIT expression and may play a role in erythroid differentiation during the switch between proliferation and maturation. Depending on the context, activates or inhibits several signaling cascades. Regulates phosphatidylinositol 3-kinase activity and AKT1 activation. Regulates activation of the MAP kinase signaling cascade, including activation of MAP2K1/MEK1, MAPK1/ERK2, MAPK3/ERK1, MAPK8/JNK1 and MAPK9/JNK2. Mediates activation of STAT5A and/or STAT5B. Phosphorylates LPXN on 'Tyr-72'. Kinase activity facilitates TLR4-TLR6 heterodimerization and signal initiation. Phosphorylates SCIMP on 'Tyr-107'; this enhances binding of SCIMP to TLR4, promoting the phosphorylation of TLR4, and a selective cytokine response to lipopolysaccharide in macrophages. Phosphorylates CLNK. Phosphorylates BCAR1/CAS and NEDD9/HEF1. In Homo sapiens (Human), this protein is Tyrosine-protein kinase Lyn (LYN).